The primary structure comprises 118 residues: Ribosomal silencing factor RsfS (118 aa).

Belongs to the Iojap/RsfS family. In terms of assembly, interacts with ribosomal protein uL14 (rplN).

It localises to the cytoplasm. Functions as a ribosomal silencing factor. Interacts with ribosomal protein uL14 (rplN), blocking formation of intersubunit bridge B8. Prevents association of the 30S and 50S ribosomal subunits and the formation of functional ribosomes, thus repressing translation. The chain is Ribosomal silencing factor RsfS from Bacillus subtilis (strain 168).